Here is a 309-residue protein sequence, read N- to C-terminus: Fe-S cluster assembly protein dre2 (309 aa).

Positions 1–132 are N-terminal SAM-like domain; sequence MTTTIVLASP…LRRPAQVEAV (132 aa). The tract at residues 133-195 is linker; that stretch reads PLKLSTKKSA…DALVSDEETQ (63 aa). Positions 207, 216, 219, and 221 each coordinate [2Fe-2S] cluster. The segment at 207 to 221 is fe-S binding site A; it reads CSKPGKKKRCKNCTC. Residues Cys265, Cys268, Cys276, and Cys279 each contribute to the [4Fe-4S] cluster site. 2 short sequence motifs (cx2C motif) span residues 265-268 and 276-279; these read CGSC and CSGC. Residues 265 to 279 form a fe-S binding site B region; that stretch reads CGSCYLGDAFRCSGC.

Belongs to the anamorsin family. As to quaternary structure, monomer. Interacts with TAH18. Interacts with MIA40. [2Fe-2S] cluster serves as cofactor. [4Fe-4S] cluster is required as a cofactor.

The protein resides in the cytoplasm. The protein localises to the mitochondrion intermembrane space. In terms of biological role, component of the cytosolic iron-sulfur (Fe-S) protein assembly (CIA) machinery required for the maturation of extramitochondrial Fe-S proteins. Part of an electron transfer chain functioning in an early step of cytosolic Fe-S biogenesis, facilitating the de novo assembly of a [4Fe-4S] cluster on the scaffold complex CFD1-NBP35. Electrons are transferred to DRE2 from NADPH via the FAD- and FMN-containing protein TAH18. TAH18-DRE2 are also required for the assembly of the diferric tyrosyl radical cofactor of ribonucleotide reductase (RNR), probably by providing electrons for reduction during radical cofactor maturation in the catalytic small subunit RNR2. The protein is Fe-S cluster assembly protein dre2 of Schizosaccharomyces japonicus (strain yFS275 / FY16936) (Fission yeast).